The following is a 483-amino-acid chain: Cobyric acid synthase (483 aa).

A GATase cobBQ-type domain is found at 248–435 (VLKVVVPVLP…LHGLFETAAA (188 aa)). Cysteine 329 (nucleophile) is an active-site residue. Histidine 427 is a catalytic residue.

The protein belongs to the CobB/CobQ family. CobQ subfamily.

It participates in cofactor biosynthesis; adenosylcobalamin biosynthesis. Functionally, catalyzes amidations at positions B, D, E, and G on adenosylcobyrinic A,C-diamide. NH(2) groups are provided by glutamine, and one molecule of ATP is hydrogenolyzed for each amidation. The protein is Cobyric acid synthase of Pseudomonas fluorescens (strain SBW25).